The sequence spans 538 residues: Putative cysteine ligase BshC (538 aa).

A coiled-coil region spans residues 460-484; the sequence is KINEQIELLERMLKRNVEKKHEVEL.

It belongs to the BshC family.

Involved in bacillithiol (BSH) biosynthesis. May catalyze the last step of the pathway, the addition of cysteine to glucosamine malate (GlcN-Mal) to generate BSH. This chain is Putative cysteine ligase BshC, found in Bacillus thuringiensis subsp. konkukian (strain 97-27).